The sequence spans 365 residues: Protein AC54 (365 aa).

In terms of assembly, interacts with C42 and VP80. Interacts with protein 38K.

Its subcellular location is the virion. Structural protein that participates in nucleocapsid assembly. Plays an essential role in the proper localization of the major capsid protein VP39, and the minor capsid protein 38K into the capsid assembly site. In Lepidoptera (butterflies and moths), this protein is Protein AC54 (AC54).